The sequence spans 335 residues: uncharacterized protein (335 aa).

Solcar repeat units lie at residues 22–129 (VKPI…LLPL), 134–227 (GFPA…IRLF), and 244–327 (KDLY…TKKY). Helical transmembrane passes span 28 to 48 (MLSA…LDVV), 104 to 123 (GLVP…FLGY), 133 to 154 (WGFP…ATIV), 195 to 219 (GILN…FYWW), 246 to 263 (LYIN…ATLL), and 307 to 323 (CVKV…SYHL).

This sequence belongs to the mitochondrial carrier (TC 2.A.29) family.

The protein localises to the mitochondrion inner membrane. This is an uncharacterized protein from Schizosaccharomyces pombe (strain 972 / ATCC 24843) (Fission yeast).